The primary structure comprises 465 residues: Cysteine--tRNA ligase (465 aa).

Residue cysteine 29 participates in Zn(2+) binding. Residues 31 to 41 (PTVYNYIHIGN) carry the 'HIGH' region motif. 3 residues coordinate Zn(2+): cysteine 209, histidine 234, and glutamate 238. Residues 266–270 (KMSKS) carry the 'KMSKS' region motif. Lysine 269 serves as a coordination point for ATP. Serine 270 is subject to Phosphoserine.

Belongs to the class-I aminoacyl-tRNA synthetase family. As to quaternary structure, monomer. Zn(2+) serves as cofactor.

The protein resides in the cytoplasm. It catalyses the reaction tRNA(Cys) + L-cysteine + ATP = L-cysteinyl-tRNA(Cys) + AMP + diphosphate. The protein is Cysteine--tRNA ligase of Bacillus cereus (strain AH187).